The following is a 289-amino-acid chain: Probable phosphoribulokinase (289 aa).

12–20 provides a ligand contact to ATP; that stretch reads GSSGAGTTT.

The protein belongs to the phosphoribulokinase family.

It catalyses the reaction D-ribulose 5-phosphate + ATP = D-ribulose 1,5-bisphosphate + ADP + H(+). The protein is Probable phosphoribulokinase (prkB) of Escherichia coli (strain K12).